A 578-amino-acid chain; its full sequence is DNA polymerase III subunit gamma/tau (578 aa).

42–49 (GPRGCGKT) lines the ATP pocket. C61, C70, C73, and C76 together coordinate Zn(2+). Disordered regions lie at residues 389 to 423 (APQA…ASSE) and 525 to 559 (AVNP…RDPE). 2 stretches are compositionally biased toward basic and acidic residues: residues 402–412 (EPKHQPAREPR) and 536–559 (QRDE…RDPE).

The protein belongs to the DnaX/STICHEL family. DNA polymerase III contains a core (composed of alpha, epsilon and theta chains) that associates with a tau subunit. This core dimerizes to form the POLIII' complex. PolIII' associates with the gamma complex (composed of gamma, delta, delta', psi and chi chains) and with the beta chain to form the complete DNA polymerase III complex.

The enzyme catalyses DNA(n) + a 2'-deoxyribonucleoside 5'-triphosphate = DNA(n+1) + diphosphate. DNA polymerase III is a complex, multichain enzyme responsible for most of the replicative synthesis in bacteria. This DNA polymerase also exhibits 3' to 5' exonuclease activity. This chain is DNA polymerase III subunit gamma/tau (dnaX), found in Mycobacterium bovis (strain ATCC BAA-935 / AF2122/97).